We begin with the raw amino-acid sequence, 73 residues long: MQIKHLITLFFLVLIVADQCSAFFSLIPSLIGGLVSAIKGRKKREISTQIDQYRNLQKREAELEELLDRLPMY.

A signal peptide spans 1-22; it reads MQIKHLITLFFLVLIVADQCSA. The propeptide occupies 45 to 73; that stretch reads EISTQIDQYRNLQKREAELEELLDRLPMY.

Belongs to the non-disulfide-bridged peptide (NDBP) superfamily. Short antimicrobial peptide (group 4) family. As to expression, expressed by the venom gland.

It localises to the secreted. Its function is as follows. Antibacterial peptide. This chain is Antimicrobial peptide 6, found in Tityus costatus (Brazilian scorpion).